Consider the following 228-residue polypeptide: CD9 antigen (228 aa).

Over 1–12 the chain is Cytoplasmic; sequence MPVKGGTKCIKY. Residue Cys9 is the site of S-palmitoyl cysteine attachment. The chain crosses the membrane as a helical span at residues 13 to 33; it reads LLFGFNFIFWLAGIAVLAIGL. Residues 34 to 55 lie on the Extracellular side of the membrane; sequence WLRFDSQTKSIFEQETNNNNSS. Residues Asn52 and Asn53 are each glycosylated (N-linked (GlcNAc...) asparagine). The chain crosses the membrane as a helical span at residues 56 to 76; the sequence is FYTGVYILIGAGALMMLVGFL. Topologically, residues 77–87 are cytoplasmic; the sequence is GCCGAVQESQC. 3 S-palmitoyl cysteine lipidation sites follow: Cys78, Cys79, and Cys87. Residues 88 to 111 form a helical membrane-spanning segment; it reads MLGLFFGFLLVIFAIEIAAAIWGY. Over 112 to 195 the chain is Extracellular; the sequence is SHKDEVIKEV…KEVFDNKFHI (84 aa). Cystine bridges form between Cys152-Cys181 and Cys153-Cys167. The chain crosses the membrane as a helical span at residues 196-221; that stretch reads IGAVGIGIAVVMIFGMIFSMILCCAI. Residues Cys218 and Cys219 are each lipidated (S-palmitoyl cysteine). Over 222-228 the chain is Cytoplasmic; the sequence is RRNREMV.

This sequence belongs to the tetraspanin (TM4SF) family. In terms of assembly, forms both disulfide-linked homodimers and higher homooligomers as well as heterooligomers with other members of the tetraspanin family. Interacts (via the second extracellular domain) with integrin ITGAV:ITGB3. Interacts with integrin ITGA6:ITGB1; interaction takes place in oocytes and is involved in sperm-egg fusion. Part of integrin-tetraspanin complexes composed of CD81, beta-1 and beta-2 integrins in the membrane of monocyte/macrophages. Interacts with CD63; identified in a complex with CD63 and ITGB3. Associates with CR2/CD21 and with PTGFRN/CD9P1. Part of a complex composed of CD9, CD81, PTGFRN and IGSF8. Interacts directly with IGSF8. Interacts with PDPN; this interaction is homophilic and attenuates platelet aggregation and pulmonary metastasis induced by PDPN. Interacts (on T cell side) with CD81 at immunological synapses between antigen-presenting cells and T cells. Post-translationally, palmitoylated at a low, basal level in unstimulated platelets. The level of palmitoylation increases when platelets are activated by thrombin (in vitro). The protein exists in three forms with molecular masses between 22 and 27 kDa, and is known to carry covalently linked fatty acids. Palmitoylation by ZDHHC2 regulates CD9 expression, association with other tetraspanin family proteins and function in cell adhesion.

The protein localises to the cell membrane. Its subcellular location is the membrane. It localises to the secreted. It is found in the extracellular exosome. Its function is as follows. Integral membrane protein associated with integrins, which regulates different processes, such as sperm-egg fusion, platelet activation and aggregation, and cell adhesion. Present at the cell surface of oocytes and plays a key role in sperm-egg fusion, possibly by organizing multiprotein complexes and the morphology of the membrane required for the fusion. In myoblasts, associates with CD81 and PTGFRN and inhibits myotube fusion during muscle regeneration. In macrophages, associates with CD81 and beta-1 and beta-2 integrins, and prevents macrophage fusion into multinucleated giant cells specialized in ingesting complement-opsonized large particles. Also prevents the fusion between mononuclear cell progenitors into osteoclasts in charge of bone resorption. Acts as a receptor for PSG17. Involved in platelet activation and aggregation. Regulates paranodal junction formation. Involved in cell adhesion, cell motility and tumor metastasis. This is CD9 antigen from Chlorocebus aethiops (Green monkey).